Consider the following 235-residue polypeptide: Large ribosomal subunit protein uL1 (235 aa).

The protein belongs to the universal ribosomal protein uL1 family. Part of the 50S ribosomal subunit.

In terms of biological role, binds directly to 23S rRNA. The L1 stalk is quite mobile in the ribosome, and is involved in E site tRNA release. Functionally, protein L1 is also a translational repressor protein, it controls the translation of the L11 operon by binding to its mRNA. The sequence is that of Large ribosomal subunit protein uL1 from Blochmanniella floridana.